Reading from the N-terminus, the 414-residue chain is Serine hydroxymethyltransferase (414 aa).

(6S)-5,6,7,8-tetrahydrofolate is bound by residues Leu-118 and 122 to 124 (GHL). Lys-227 bears the N6-(pyridoxal phosphate)lysine mark. Residues Glu-240 and 350–352 (SPF) each bind (6S)-5,6,7,8-tetrahydrofolate.

The protein belongs to the SHMT family. As to quaternary structure, homodimer. Pyridoxal 5'-phosphate serves as cofactor.

The protein localises to the cytoplasm. The catalysed reaction is (6R)-5,10-methylene-5,6,7,8-tetrahydrofolate + glycine + H2O = (6S)-5,6,7,8-tetrahydrofolate + L-serine. The protein operates within one-carbon metabolism; tetrahydrofolate interconversion. Its pathway is amino-acid biosynthesis; glycine biosynthesis; glycine from L-serine: step 1/1. Functionally, catalyzes the reversible interconversion of serine and glycine with tetrahydrofolate (THF) serving as the one-carbon carrier. This reaction serves as the major source of one-carbon groups required for the biosynthesis of purines, thymidylate, methionine, and other important biomolecules. Also exhibits THF-independent aldolase activity toward beta-hydroxyamino acids, producing glycine and aldehydes, via a retro-aldol mechanism. This chain is Serine hydroxymethyltransferase, found in Bacillus thuringiensis (strain Al Hakam).